A 142-amino-acid polypeptide reads, in one-letter code: UPF0102 protein Synpcc7942_0312 (142 aa).

This sequence belongs to the UPF0102 family.

In Synechococcus elongatus (strain ATCC 33912 / PCC 7942 / FACHB-805) (Anacystis nidulans R2), this protein is UPF0102 protein Synpcc7942_0312.